Consider the following 148-residue polypeptide: CDC25-like phosphatase YCH1 (148 aa).

M1 is subject to N-acetylmethionine. The Rhodanese domain occupies 29–137; that stretch reads LREPFQVVDV…WQSVYGDDES (109 aa).

Belongs to the MPI phosphatase family.

It is found in the cytoplasm. It localises to the nucleus. Its function is as follows. Protein phosphatase. The protein is CDC25-like phosphatase YCH1 (YCH1) of Saccharomyces cerevisiae (strain ATCC 204508 / S288c) (Baker's yeast).